The following is a 338-amino-acid chain: Methionine synthase (338 aa).

Residues His-210, Cys-212, Glu-234, and Cys-294 each coordinate Zn(2+).

Belongs to the archaeal MetE family. Zn(2+) serves as cofactor.

Its pathway is amino-acid biosynthesis; L-methionine biosynthesis via de novo pathway. Functionally, catalyzes the transfer of a methyl group to L-homocysteine resulting in methionine formation. The physiological methyl donor is unknown. The sequence is that of Methionine synthase from Pyrococcus abyssi (strain GE5 / Orsay).